The sequence spans 493 residues: Glycerol kinase (493 aa).

ADP is bound at residue threonine 11. ATP contacts are provided by threonine 11, threonine 12, and serine 13. Threonine 11 contributes to the sn-glycerol 3-phosphate binding site. Arginine 15 is an ADP binding site. Sn-glycerol 3-phosphate-binding residues include arginine 80, glutamate 81, tyrosine 132, and aspartate 241. 5 residues coordinate glycerol: arginine 80, glutamate 81, tyrosine 132, aspartate 241, and glutamine 242. Positions 263 and 306 each coordinate ADP. ATP is bound by residues threonine 263, glycine 306, glutamine 310, and glycine 408. Glycine 408 is an ADP binding site.

Belongs to the FGGY kinase family.

It carries out the reaction glycerol + ATP = sn-glycerol 3-phosphate + ADP + H(+). The protein operates within polyol metabolism; glycerol degradation via glycerol kinase pathway; sn-glycerol 3-phosphate from glycerol: step 1/1. Its activity is regulated as follows. Inhibited by fructose 1,6-bisphosphate (FBP). In terms of biological role, key enzyme in the regulation of glycerol uptake and metabolism. Catalyzes the phosphorylation of glycerol to yield sn-glycerol 3-phosphate. This is Glycerol kinase from Cereibacter sphaeroides (strain ATCC 17029 / ATH 2.4.9) (Rhodobacter sphaeroides).